Here is a 340-residue protein sequence, read N- to C-terminus: Centromere protein N (340 aa).

Ser-227 and Ser-236 each carry phosphoserine.

It belongs to the CENP-N/CHL4 family. In terms of assembly, component of the CENPA-NAC complex, at least composed of CENPA, CENPC, CENPH, CENPM, CENPN, CENPT and CENPU. The CENPA-NAC complex interacts with the CENPA-CAD complex, composed of CENPI, CENPK, CENPL, CENPO, CENPP, CENPQ, CENPR and CENPS. Interacts directly with CENPA. Identified in a centromere complex containing histones H2A, H2B and H4, and at least CENPA, CENPB, CENPC, CENPT, CENPN, HJURP, SUPT16H, SSRP1 and RSF1.

The protein localises to the nucleus. Its subcellular location is the chromosome. The protein resides in the centromere. It localises to the kinetochore. In terms of biological role, component of the CENPA-NAC (nucleosome-associated) complex, a complex that plays a central role in assembly of kinetochore proteins, mitotic progression and chromosome segregation. The CENPA-NAC complex recruits the CENPA-CAD (nucleosome distal) complex and may be involved in incorporation of newly synthesized CENPA into centromeres. CENPN is the first protein to bind specifically to CENPA nucleosomes and the direct binding of CENPA nucleosomes by CENPN is required for centromere assembly. Required for chromosome congression and efficiently align the chromosomes on a metaphase plate. This Rattus norvegicus (Rat) protein is Centromere protein N (Cenpn).